The primary structure comprises 101 residues: Guanyl-specific ribonuclease St (101 aa).

An intrachain disulfide couples C4 to C54. The Proton acceptor role is filled by E61. H91 functions as the Proton donor in the catalytic mechanism.

The protein belongs to the ribonuclease N1/T1 family.

It catalyses the reaction [RNA] containing guanosine + H2O = an [RNA fragment]-3'-guanosine-3'-phosphate + a 5'-hydroxy-ribonucleotide-3'-[RNA fragment].. In Saccharopolyspora erythraea (Streptomyces erythraeus), this protein is Guanyl-specific ribonuclease St.